A 159-amino-acid polypeptide reads, in one-letter code: Putative ribosomal RNA large subunit methyltransferase H (159 aa).

Residues leucine 76, glycine 108, and 127–132 each bind S-adenosyl-L-methionine; that span reads FSKMTF.

Belongs to the RNA methyltransferase RlmH family.

The protein resides in the cytoplasm. It catalyses the reaction pseudouridine(1915) in 23S rRNA + S-adenosyl-L-methionine = N(3)-methylpseudouridine(1915) in 23S rRNA + S-adenosyl-L-homocysteine + H(+). Specifically methylates the pseudouridine at position 1915 (m3Psi1915) in 23S rRNA. The polypeptide is Putative ribosomal RNA large subunit methyltransferase H (Methanococcus maripaludis (strain C5 / ATCC BAA-1333)).